The sequence spans 391 residues: Zinc finger protein 414 (391 aa).

The interval 1–110 is disordered; that stretch reads MDEEPSGPSL…RRPPPGKQIP (110 aa). A compositionally biased stretch (polar residues) spans 84–93; that stretch reads GPTSTVSGTS. 3 C2H2-type zinc fingers span residues 109 to 133, 145 to 169, and 176 to 201; these read IPCS…LRTH, FRCS…GKLH, and FKCE…CAEH. 3 disordered regions span residues 201–243, 274–312, and 344–391; these read HAQS…LEPF, LAAA…SGHA, and HLED…FSPL. Basic and acidic residues predominate over residues 214–226; sequence LDRESPASERPPE. Pro residues predominate over residues 227-236; it reads SDPAPAPGLP. Residues 274–286 show a composition bias toward low complexity; sequence LAAAPGPPASSAA. The C2H2-type 4 zinc-finger motif lies at 326–348; the sequence is YSCMQCAFSTASRPAMTLHLEDH. Over residues 353-372 the composition is skewed to pro residues; sequence PAAPAPGQPRPDAPADPAPL.

The protein belongs to the krueppel C2H2-type zinc-finger protein family.

The protein resides in the nucleus. Functionally, may be involved in transcriptional regulation. The protein is Zinc finger protein 414 (ZNF414) of Bos taurus (Bovine).